We begin with the raw amino-acid sequence, 278 residues long: HCLS1-associated protein X-1 (278 aa).

S2 is modified (N-acetylserine). The tract at residues 2 to 43 (SVFDLFRGFFGFPGPRSHRDPFFGGMTRDDDDDEDDEEEEDS) is required for localization in mitochondria. Disordered regions lie at residues 15–50 (GPRS…GRES) and 99–262 (LPSH…ALDD). Positions 30–43 (DDDDDEDDEEEEDS) are enriched in acidic residues. Positions 113–278 (TPGVRLREGQ…LLLGRWFRSR (166 aa)) are involved in HCLS1 binding. Residues 132-152 (PDSHQPRIFEGVLESHAKPES) are compositionally biased toward basic and acidic residues. Residues 174 to 205 (VSPHSRAREDKDLDSQVSQEGLGPLLQPQPKS) are involved in CASP9 binding. The involved in GNA13 binding stretch occupies residues 175-246 (SPHSRAREDK…TTVTHQEAHD (72 aa)). A required for localization in sarcoplasmic reticulum region spans residues 182–278 (EDKDLDSQVS…LLLGRWFRSR (97 aa)). The interval 183-278 (DKDLDSQVSQ…LLLGRWFRSR (96 aa)) is involved in PKD2 binding. S188 and S191 each carry phosphoserine. An involved in PLN binding region spans residues 202–224 (QPKSYFKSISVTKITKPDGTVEE). Residues 202-244 (QPKSYFKSISVTKITKPDGTVEEHRTVVDSEGRRETTVTHQEA) are involved in ATP2A2 binding. Residues 209–278 (SISVTKITKP…LLLGRWFRSR (70 aa)) are mediates interaction with UCP3. The segment covering 216 to 254 (TKPDGTVEEHRTVVDSEGRRETTVTHQEAHDSSRSDPDP) has biased composition (basic and acidic residues). A required for ITGB6 binding region spans residues 269 to 278 (LLLGRWFRSR).

This sequence belongs to the HAX1 family. As to quaternary structure, interacts with ABCB1, ABCB4 and ABCB11. Directly associates with HCLS1/HS1, through binding to its N-terminal region. Interacts with CTTN. Interacts with PKD2. Interacts with GNA13. Interacts with CASP9. Interacts with ITGB6. Interacts with PLN and ATP2A2; these interactions are inhibited by calcium. Interacts with GRB7. Interacts (via C-terminus) with XIAP/BIRC4 (via BIR 2 domain and BIR 3 domain) and this interaction blocks ubiquitination of XIAP/BIRC4. Interacts with TPC2. Interacts with KCNC3. Interacts with XPO1. Interacts with RNF217. Interacts with UCP3; the interaction is direct and calcium-dependent. Interacts with MAPRE2; this interaction regulates cell migration in keratinocytes. In terms of tissue distribution, present in striated muscles (at protein level).

Its subcellular location is the mitochondrion matrix. It is found in the endoplasmic reticulum. It localises to the nucleus membrane. The protein localises to the cytoplasmic vesicle. The protein resides in the cytoplasm. Its subcellular location is the cell cortex. It is found in the cell membrane. It localises to the sarcoplasmic reticulum. The protein localises to the P-body. The protein resides in the nucleus. Functionally, recruits the Arp2/3 complex to the cell cortex and regulates reorganization of the cortical actin cytoskeleton via its interaction with KCNC3 and the Arp2/3 complex. Slows down the rate of inactivation of KCNC3 channels. Promotes GNA13-mediated cell migration. Involved in the clathrin-mediated endocytosis pathway. May be involved in internalization of ABC transporters such as ABCB11. May inhibit CASP9 and CASP3. Promotes cell survival. May regulate intracellular calcium pools. The polypeptide is HCLS1-associated protein X-1 (Hax1) (Rattus norvegicus (Rat)).